Here is a 797-residue protein sequence, read N- to C-terminus: Methionine--tRNA ligase, cytoplasmic (797 aa).

Residues 26-36 (PYVNNVPHLGN) carry the 'HIGH' region motif. A 'KMSKS' region motif is present at residues 348–352 (KFSKS). Lysine 351 contacts ATP. The disordered stretch occupies residues 601–634 (DQLNKTKLSDAKKQKASSKGGGKPKPQPAADREI). Positions 635–738 (TMARLDIRVG…KTANIGERVT (104 aa)) constitute a tRNA-binding domain.

It belongs to the class-I aminoacyl-tRNA synthetase family.

The protein resides in the cytoplasm. Its subcellular location is the cytosol. It catalyses the reaction tRNA(Met) + L-methionine + ATP = L-methionyl-tRNA(Met) + AMP + diphosphate. The sequence is that of Methionine--tRNA ligase, cytoplasmic from Arabidopsis thaliana (Mouse-ear cress).